The following is a 168-amino-acid chain: Thiol peroxidase (168 aa).

The 149-residue stretch at Pro-20–Ala-168 folds into the Thioredoxin domain. The active-site Cysteine sulfenic acid (-SOH) intermediate is Cys-62. Cys-62 and Cys-96 form a disulfide bridge.

It belongs to the peroxiredoxin family. Tpx subfamily. Homodimer.

The enzyme catalyses a hydroperoxide + [thioredoxin]-dithiol = an alcohol + [thioredoxin]-disulfide + H2O. In terms of biological role, thiol-specific peroxidase that catalyzes the reduction of hydrogen peroxide and organic hydroperoxides to water and alcohols, respectively. Plays a role in cell protection against oxidative stress by detoxifying peroxides. This is Thiol peroxidase from Chlorobaculum tepidum (strain ATCC 49652 / DSM 12025 / NBRC 103806 / TLS) (Chlorobium tepidum).